The primary structure comprises 579 residues: XK-related protein 7 (579 aa).

Residues methionine 1 to glycine 18 are compositionally biased toward low complexity. Residues methionine 1–proline 40 form a disordered region. Gly residues predominate over residues alanine 19–glycine 31. 2 helical membrane passes run tryptophan 59–alanine 79 and tyrosine 89–phenylalanine 109. The segment at glycine 146–serine 165 is disordered. Helical transmembrane passes span leucine 260 to tyrosine 280, glycine 314 to alanine 334, tryptophan 355 to valine 375, methionine 384 to serine 404, and leucine 415 to tyrosine 435. Positions alanine 466–threonine 510 are disordered.

It belongs to the XK family.

The protein localises to the cell membrane. The polypeptide is XK-related protein 7 (Homo sapiens (Human)).